The sequence spans 931 residues: Dipeptidyl aminopeptidase A (931 aa).

The segment covering 1-13 has biased composition (basic residues); the sequence is MSASTHSHKRKNS. The disordered stretch occupies residues 1–58; sequence MSASTHSHKRKNSHLFPQRKSSNSSMDKPFFPNNDSVANTDPQSNENGHTINEIRPTE. The Cytoplasmic segment spans residues 1–119; it reads MSASTHSHKR…GEWSLPEKRS (119 aa). Polar residues predominate over residues 33–50; the sequence is NNDSVANTDPQSNENGHT. The helical; Signal-anchor for type II membrane protein transmembrane segment at 120 to 140 threads the bilayer; it reads YVLVFTLIALSVLVLLVILIP. Residues 141 to 931 are Lumenal-facing; that stretch reads SKLLPTKITR…RFDNTEVLHL (791 aa). Residue asparagine 377 is glycosylated (N-linked (GlcNAc...) asparagine). Serine 785 serves as the catalytic Charge relay system. Residue asparagine 814 is glycosylated (N-linked (GlcNAc...) asparagine). Catalysis depends on charge relay system residues aspartate 863 and histidine 896.

This sequence belongs to the peptidase S9B family.

It is found in the vacuole membrane. Functionally, responsible for the proteolytic maturation of the alpha-factor precursor. The chain is Dipeptidyl aminopeptidase A (STE13) from Saccharomyces cerevisiae (strain ATCC 204508 / S288c) (Baker's yeast).